Here is a 435-residue protein sequence, read N- to C-terminus: T-box transcription factor T (435 aa).

The segment at residues 51 to 219 (LWLRFKELTN…YNPFAKAFLD (169 aa)) is a DNA-binding region (T-box). 2 disordered regions span residues 280–310 (PALR…PSAC) and 384–412 (APLG…DVPD). The span at 297 to 310 (RNNSPTYSDNPSAC) shows a compositional bias: polar residues.

As to quaternary structure, monomer. Binds DNA as a monomer.

The protein localises to the nucleus. In terms of biological role, involved in the transcriptional regulation of genes required for mesoderm formation and differentiation. Binds to a palindromic site (called T site) and activates gene transcription when bound to such a site. The sequence is that of T-box transcription factor T from Canis lupus familiaris (Dog).